The sequence spans 305 residues: D-alanine--D-alanine ligase (305 aa).

Residues 105-300 (KMIWQAAGIN…FDELVVQILE (196 aa)) enclose the ATP-grasp domain. 131–186 (ADRLGLPLIIKPAREGSTLGLNKVDNEQDFRSAYQAAAEYDSLVLAEQFIQGIELT) lines the ATP pocket. Residues Asp254, Glu267, and Asn269 each coordinate Mg(2+).

This sequence belongs to the D-alanine--D-alanine ligase family. Mg(2+) is required as a cofactor. Mn(2+) serves as cofactor.

Its subcellular location is the cytoplasm. It catalyses the reaction 2 D-alanine + ATP = D-alanyl-D-alanine + ADP + phosphate + H(+). The protein operates within cell wall biogenesis; peptidoglycan biosynthesis. Its function is as follows. Cell wall formation. This chain is D-alanine--D-alanine ligase, found in Nitrosomonas europaea (strain ATCC 19718 / CIP 103999 / KCTC 2705 / NBRC 14298).